The sequence spans 189 residues: Inosine triphosphate pyrophosphatase (189 aa).

An ITP-binding site is contributed by 8-13 (TGNANK). Glu39 contacts Mg(2+). ITP-binding positions include Lys51, 67-68 (DT), Lys84, 143-146 (FGWD), Lys167, and 172-173 (HR).

The protein belongs to the HAM1 NTPase family. In terms of assembly, homodimer. Requires Mg(2+) as cofactor. Mn(2+) serves as cofactor.

The protein resides in the cytoplasm. It is found in the nucleus. The catalysed reaction is ITP + H2O = IMP + diphosphate + H(+). It catalyses the reaction dITP + H2O = dIMP + diphosphate + H(+). It carries out the reaction XTP + H2O = XMP + diphosphate + H(+). Pyrophosphatase that hydrolyzes non-canonical purine nucleotides such as inosine triphosphate (ITP), deoxyinosine triphosphate (dITP) or xanthosine 5'-triphosphate (XTP) to their respective monophosphate derivatives. The enzyme does not distinguish between the deoxy- and ribose forms. Probably excludes non-canonical purines from RNA and DNA precursor pools, thus preventing their incorporation into RNA and DNA and avoiding chromosomal lesions. The protein is Inosine triphosphate pyrophosphatase of Cryptococcus neoformans var. neoformans serotype D (strain JEC21 / ATCC MYA-565) (Filobasidiella neoformans).